Here is a 137-residue protein sequence, read N- to C-terminus: Envelope glycoprotein L (137 aa).

The N-terminal stretch at 1 to 22 (MRAVGVFLAICLVTIFVLPTWG) is a signal peptide. The interaction with gH stretch occupies residues 23 to 128 (NWAYPCCHVT…SVEDLFGANL (106 aa)). Intrachain disulfides connect C28–C56 and C29–C79.

This sequence belongs to the herpesviridae glycoprotein L family. Interacts with glycoprotein H (gH); this interaction is necessary for the correct processing and cell surface expression of gH. The heterodimer gH/gL seems to interact with gB trimers during fusion. The heterodimer gH/gL interacts with host EPHA2 to facilitate virus internalization and fusion.

Its subcellular location is the virion membrane. The protein localises to the host cell membrane. It is found in the host Golgi apparatus. The protein resides in the host trans-Golgi network. Functionally, the heterodimer glycoprotein H-glycoprotein L is required for the fusion of viral and plasma membranes leading to virus entry into the host cell. Acts as a functional inhibitor of gH and maintains gH in an inhibited form. Upon binding to host integrins, gL dissociates from gH leading to activation of the viral fusion glycoproteins gB and gH. Fusion of EBV with B-lymphocytes requires the additional receptor-binding protein gp42, which forms a complex with gH/gL. The heterodimer gH/gL targets also host EPHA2 to promote viral entry. This Homo sapiens (Human) protein is Envelope glycoprotein L.